The sequence spans 180 residues: MVKESIPKEGENIKIQSYKHDGNIHRVWSETTILKGTEHVIIGGNDHTLVTESDGRTWITREPAIVYFHSEYWFNVICMFREDGIYYYCNLSSPFACDEEALKYIDYDLDIKVYPNGKYHLLDEDEYEQHMNQMNYPHDIDIILRRNVDILQQWIEQKKGPFAPDFIKVWKERYKKIRDY.

The Proton donor role is filled by arginine 26. 6 residues coordinate Mg(2+): asparagine 90, aspartate 106, aspartate 108, aspartate 110, aspartate 123, and glutamate 126.

It belongs to the Ntdp family. Mg(2+) is required as a cofactor.

It carries out the reaction a ribonucleoside 5'-triphosphate + H2O = a ribonucleoside 5'-diphosphate + phosphate + H(+). The enzyme catalyses a ribonucleoside 5'-diphosphate + H2O = a ribonucleoside 5'-phosphate + phosphate + H(+). Its function is as follows. Has nucleoside phosphatase activity towards nucleoside triphosphates and nucleoside diphosphates. This chain is Nucleoside triphosphate/diphosphate phosphatase, found in Staphylococcus epidermidis (strain ATCC 35984 / DSM 28319 / BCRC 17069 / CCUG 31568 / BM 3577 / RP62A).